The chain runs to 85 residues: uncharacterized protein (85 aa).

Transmembrane regions (helical) follow at residues 16 to 34 (WALS…CAYL) and 50 to 71 (LSCI…KIIF).

To E.coli YhdT.

The protein localises to the cell membrane. This is an uncharacterized protein from Haemophilus influenzae (strain ATCC 51907 / DSM 11121 / KW20 / Rd).